A 139-amino-acid chain; its full sequence is Large-conductance mechanosensitive channel (139 aa).

The next 2 helical transmembrane spans lie at 9-29 (AFAV…GAAF) and 79-99 (IQSV…VKAI).

It belongs to the MscL family. In terms of assembly, homopentamer.

It is found in the cell inner membrane. Channel that opens in response to stretch forces in the membrane lipid bilayer. May participate in the regulation of osmotic pressure changes within the cell. In Pseudomonas fluorescens (strain SBW25), this protein is Large-conductance mechanosensitive channel.